A 101-amino-acid polypeptide reads, in one-letter code: Small ribosomal subunit protein uS14 (101 aa).

The tract at residues 32-67 is disordered; the sequence is SDAKRSDEEREAARLGLQKLPRNANPTRQRNRCEIT. A compositionally biased stretch (basic and acidic residues) spans 33-44; it reads DAKRSDEEREAA.

Belongs to the universal ribosomal protein uS14 family. In terms of assembly, part of the 30S ribosomal subunit. Contacts proteins S3 and S10.

In terms of biological role, binds 16S rRNA, required for the assembly of 30S particles and may also be responsible for determining the conformation of the 16S rRNA at the A site. This chain is Small ribosomal subunit protein uS14, found in Paracidovorax citrulli (strain AAC00-1) (Acidovorax citrulli).